The primary structure comprises 398 residues: Lipoyl synthase, mitochondrial (398 aa).

A mitochondrion-targeting transit peptide spans 1–32 (MIALRVHNTRVVSRSLTVWTRPSPTLTLSRSL). C117, C122, C128, C147, C151, C154, and S362 together coordinate [4Fe-4S] cluster. In terms of domain architecture, Radical SAM core spans 132–351 (KKSEATATIM…RDTALEMGFL (220 aa)).

This sequence belongs to the radical SAM superfamily. Lipoyl synthase family. Requires [4Fe-4S] cluster as cofactor.

It localises to the mitochondrion. The enzyme catalyses [[Fe-S] cluster scaffold protein carrying a second [4Fe-4S](2+) cluster] + N(6)-octanoyl-L-lysyl-[protein] + 2 oxidized [2Fe-2S]-[ferredoxin] + 2 S-adenosyl-L-methionine + 4 H(+) = [[Fe-S] cluster scaffold protein] + N(6)-[(R)-dihydrolipoyl]-L-lysyl-[protein] + 4 Fe(3+) + 2 hydrogen sulfide + 2 5'-deoxyadenosine + 2 L-methionine + 2 reduced [2Fe-2S]-[ferredoxin]. It functions in the pathway protein modification; protein lipoylation via endogenous pathway; protein N(6)-(lipoyl)lysine from octanoyl-[acyl-carrier-protein]: step 2/2. Functionally, catalyzes the radical-mediated insertion of two sulfur atoms into the C-6 and C-8 positions of the octanoyl moiety bound to the lipoyl domains of lipoate-dependent enzymes, thereby converting the octanoylated domains into lipoylated derivatives. The polypeptide is Lipoyl synthase, mitochondrial (Scheffersomyces stipitis (strain ATCC 58785 / CBS 6054 / NBRC 10063 / NRRL Y-11545) (Yeast)).